Here is a 328-residue protein sequence, read N- to C-terminus: 4-hydroxythreonine-4-phosphate dehydrogenase (328 aa).

Substrate is bound by residues His-134 and Thr-135. 3 residues coordinate a divalent metal cation: His-164, His-209, and His-265. 3 residues coordinate substrate: Lys-273, Asn-282, and Arg-291.

Belongs to the PdxA family. In terms of assembly, homodimer. Requires Zn(2+) as cofactor. It depends on Mg(2+) as a cofactor. Co(2+) serves as cofactor.

It localises to the cytoplasm. The enzyme catalyses 4-(phosphooxy)-L-threonine + NAD(+) = 3-amino-2-oxopropyl phosphate + CO2 + NADH. It functions in the pathway cofactor biosynthesis; pyridoxine 5'-phosphate biosynthesis; pyridoxine 5'-phosphate from D-erythrose 4-phosphate: step 4/5. In terms of biological role, catalyzes the NAD(P)-dependent oxidation of 4-(phosphooxy)-L-threonine (HTP) into 2-amino-3-oxo-4-(phosphooxy)butyric acid which spontaneously decarboxylates to form 3-amino-2-oxopropyl phosphate (AHAP). The sequence is that of 4-hydroxythreonine-4-phosphate dehydrogenase from Vibrio vulnificus (strain CMCP6).